The primary structure comprises 423 residues: Large ribosomal subunit protein mL37 (423 aa).

The N-terminal 29 residues, 1 to 29, are a transit peptide targeting the mitochondrion; that stretch reads MALASGPARRVLARPWGLGLEGCGVPRRG.

This sequence belongs to the mitochondrion-specific ribosomal protein mL37 family. Component of the mitochondrial ribosome large subunit (39S) which comprises a 16S rRNA and about 50 distinct proteins.

The protein resides in the mitochondrion. This is Large ribosomal subunit protein mL37 (MRPL37) from Bos taurus (Bovine).